The chain runs to 560 residues: Protein GAT2 (560 aa).

3 disordered regions span residues 274–297 (RQQEQQQLKQQESEKESSSPFSNK), 345–383 (FLSTSSSSPSPTAGSAPLQKLQVPRQDDPNDKKMNISSS), and 412–461 (LNTK…SDEK). The span at 347 to 361 (STSSSSPSPTAGSAP) shows a compositional bias: low complexity. Over residues 369-378 (RQDDPNDKKM) the composition is skewed to basic and acidic residues. The span at 414 to 425 (TKKKNNRGRPRA) shows a compositional bias: basic residues. Residues 428-456 (RQPTLTTSSHFINNSNPGAAAVSTTTPAA) show a composition bias toward polar residues. The segment at 472–497 (CFHCGETETPEWRKGPYGTRTLCNAC) adopts a GATA-type zinc-finger fold.

The chain is Protein GAT2 (GAT2) from Saccharomyces cerevisiae (strain ATCC 204508 / S288c) (Baker's yeast).